The sequence spans 382 residues: MADDKKTNEYTIEMDKLDHGNKDFEAPAPAVRPRGPPVAQLANNPILPVLAYCGSSILMTVMNKYVLSGRDFNLNFFLLCVQSIVCIVAIQTCKVSKLITYRDFNSDEAKKWFPITLLLIGMIYTGSKALQYLSIPVYTIFKNLTIILIAYGEVLWFGGSVTGLTLFSFGLMVLSSIIAAWADIKHAVESSGDATAKVSTLNAGYIWMLINCLCTSSYVLGMRKRIKLTNFKDFDTMFYNNLLSIPVLLVLTFLMEDWSSANIARNFPSTDRNGILFAMILSGLSSVFISYTSAWCVRVTSSTTYSMVGALNKLPIALSGLIFFDAPVTFPSVSAIVVGFISGIVYAVAKIKQSAKPKTGVLPMSNPPVSASSQSMRDSLRS.

Residues 1-40 (MADDKKTNEYTIEMDKLDHGNKDFEAPAPAVRPRGPPVAQ) are Cytoplasmic-facing. The helical transmembrane segment at 41–61 (LANNPILPVLAYCGSSILMTV) threads the bilayer. Over 62–71 (MNKYVLSGRD) the chain is Lumenal. Residues 72–92 (FNLNFFLLCVQSIVCIVAIQT) form a helical membrane-spanning segment. Residues 93–110 (CKVSKLITYRDFNSDEAK) lie on the Cytoplasmic side of the membrane. The helical transmembrane segment at 111–127 (KWFPITLLLIGMIYTGS) threads the bilayer. The Lumenal segment spans residues 128-134 (KALQYLS). A helical membrane pass occupies residues 135 to 151 (IPVYTIFKNLTIILIAY). Residues 152–160 (GEVLWFGGS) are Cytoplasmic-facing. The helical transmembrane segment at 161–182 (VTGLTLFSFGLMVLSSIIAAWA) threads the bilayer. The Lumenal portion of the chain corresponds to 183 to 200 (DIKHAVESSGDATAKVST). The helical transmembrane segment at 201–221 (LNAGYIWMLINCLCTSSYVLG) threads the bilayer. At 222–233 (MRKRIKLTNFKD) the chain is on the cytoplasmic side. A helical transmembrane segment spans residues 234–254 (FDTMFYNNLLSIPVLLVLTFL). The Lumenal portion of the chain corresponds to 255–274 (MEDWSSANIARNFPSTDRNG). A helical transmembrane segment spans residues 275–295 (ILFAMILSGLSSVFISYTSAW). Residues 296 to 303 (CVRVTSST) are Cytoplasmic-facing. The helical transmembrane segment at 304–324 (TYSMVGALNKLPIALSGLIFF) threads the bilayer. Topologically, residues 325–327 (DAP) are lumenal. Residues 328–348 (VTFPSVSAIVVGFISGIVYAV) form a helical membrane-spanning segment. Over 349-382 (AKIKQSAKPKTGVLPMSNPPVSASSQSMRDSLRS) the chain is Cytoplasmic. A disordered region spans residues 358-382 (KTGVLPMSNPPVSASSQSMRDSLRS). The segment covering 367-382 (PPVSASSQSMRDSLRS) has biased composition (polar residues).

Belongs to the TPT transporter family. SLC35D subfamily. In terms of assembly, homooligomer.

The protein resides in the golgi apparatus membrane. It is found in the cytoplasmic vesicle membrane. Its subcellular location is the endoplasmic reticulum membrane. In terms of biological role, involved in the import of GDP-mannose from the cytoplasm into the Golgi lumen. This Aspergillus fumigatus (strain CBS 144.89 / FGSC A1163 / CEA10) (Neosartorya fumigata) protein is GDP-mannose transporter (gmt1).